A 307-amino-acid chain; its full sequence is Nicotinamide/nicotinic acid mononucleotide adenylyltransferase 2 (307 aa).

Serine 16 and phenylalanine 17 together coordinate NAD(+). Histidine 24 is a binding site for ATP. NAD(+)-binding residues include tryptophan 92 and threonine 95. Residues cysteine 164 and cysteine 165 are each lipidated (S-palmitoyl cysteine). Residues glycine 200, aspartate 202, leucine 212, tryptophan 213, and arginine 232 each contribute to the NAD(+) site. Residue threonine 271–arginine 274 coordinates ATP.

This sequence belongs to the eukaryotic NMN adenylyltransferase family. Monomer. Mg(2+) serves as cofactor. Post-translationally, degraded in response to injured neurite. Degradation is caused by polyubiquitination by MYCBP2 after recognition by FBXO45. Palmitoylated; palmitoylation is required for membrane association.

Its subcellular location is the golgi apparatus membrane. The protein resides in the cytoplasmic vesicle membrane. The protein localises to the cytoplasm. It localises to the cell projection. It is found in the axon. The catalysed reaction is beta-nicotinamide D-ribonucleotide + ATP + H(+) = diphosphate + NAD(+). It catalyses the reaction nicotinate beta-D-ribonucleotide + ATP + H(+) = deamido-NAD(+) + diphosphate. It participates in cofactor biosynthesis; NAD(+) biosynthesis; NAD(+) from nicotinamide D-ribonucleotide: step 1/1. Its pathway is cofactor biosynthesis; NAD(+) biosynthesis; deamido-NAD(+) from nicotinate D-ribonucleotide: step 1/1. Inhibited by P1-(adenosine-5')-P3-(nicotinamide-riboside-5')-triphosphate (Np3AD) and P1-(adenosine-5')-P4-(nicotinamide-riboside-5')-tetraphosphate (Np4AD). Functionally, nicotinamide/nicotinate-nucleotide adenylyltransferase that acts as an axon maintenance factor. Axon survival factor required for the maintenance of healthy axons: acts by delaying Wallerian axon degeneration, an evolutionarily conserved process that drives the loss of damaged axons. Catalyzes the formation of NAD(+) from nicotinamide mononucleotide (NMN) and ATP. Can also use the deamidated form; nicotinic acid mononucleotide (NaMN) as substrate but with a lower efficiency. Cannot use triazofurin monophosphate (TrMP) as substrate. Also catalyzes the reverse reaction, i.e. the pyrophosphorolytic cleavage of NAD(+). For the pyrophosphorolytic activity prefers NAD(+), NADH and NaAD as substrates and degrades nicotinic acid adenine dinucleotide phosphate (NHD) less effectively. Fails to cleave phosphorylated dinucleotides NADP(+), NADPH and NaADP(+). Also acts as an activator of ADP-ribosylation by supporting the catalytic activity of PARP16 and promoting mono-ADP-ribosylation of ribosomes by PARP16. May be involved in the maintenance of axonal integrity. This is Nicotinamide/nicotinic acid mononucleotide adenylyltransferase 2 (NMNAT2) from Bos taurus (Bovine).